The primary structure comprises 72 residues: Small, acid-soluble spore protein 1 (72 aa).

Belongs to the alpha/beta-type SASP family.

Its function is as follows. SASP are bound to spore DNA. They are double-stranded DNA-binding proteins that cause DNA to change to an a-like conformation. They protect the DNA backbone from chemical and enzymatic cleavage and are thus involved in dormant spore's high resistance to UV light. This chain is Small, acid-soluble spore protein 1 (Sh-1), found in Halobacillus halophilus (strain ATCC 35676 / DSM 2266 / JCM 20832 / KCTC 3685 / LMG 17431 / NBRC 102448 / NCIMB 2269) (Sporosarcina halophila).